Consider the following 239-residue polypeptide: Small ribosomal subunit protein uS3 (239 aa).

Positions 39 to 109 (IRAMIQEIPE…KVQIKIKEVK (71 aa)) constitute a KH type-2 domain. The interval 219-239 (GALLKKQRRPRTEKPAQAGRQ) is disordered.

The protein belongs to the universal ribosomal protein uS3 family. In terms of assembly, part of the 30S ribosomal subunit. Forms a tight complex with proteins S10 and S14.

In terms of biological role, binds the lower part of the 30S subunit head. Binds mRNA in the 70S ribosome, positioning it for translation. This chain is Small ribosomal subunit protein uS3, found in Treponema denticola (strain ATCC 35405 / DSM 14222 / CIP 103919 / JCM 8153 / KCTC 15104).